A 110-amino-acid polypeptide reads, in one-letter code: Nucleoid-associated protein KPN78578_04440 (110 aa).

Belongs to the YbaB/EbfC family. In terms of assembly, homodimer.

It is found in the cytoplasm. The protein localises to the nucleoid. Functionally, binds to DNA and alters its conformation. May be involved in regulation of gene expression, nucleoid organization and DNA protection. This is Nucleoid-associated protein KPN78578_04440 from Klebsiella pneumoniae subsp. pneumoniae (strain ATCC 700721 / MGH 78578).